Consider the following 321-residue polypeptide: GTP 3',8-cyclase (321 aa).

The Radical SAM core domain maps to 5–233 (SFNRVIDYIR…QGSSKIYTLE (229 aa)). Arginine 14 contacts GTP. 2 residues coordinate [4Fe-4S] cluster: cysteine 21 and cysteine 25. Tyrosine 27 contacts S-adenosyl-L-methionine. Residue cysteine 28 participates in [4Fe-4S] cluster binding. Residue arginine 64 coordinates GTP. Glycine 68 serves as a coordination point for S-adenosyl-L-methionine. Serine 95 is a binding site for GTP. Serine 119 is an S-adenosyl-L-methionine binding site. Lysine 155 provides a ligand contact to GTP. Methionine 189 is a binding site for S-adenosyl-L-methionine. [4Fe-4S] cluster contacts are provided by cysteine 249 and cysteine 252. A GTP-binding site is contributed by 254-256 (RIR). [4Fe-4S] cluster is bound at residue cysteine 266.

Belongs to the radical SAM superfamily. MoaA family. Monomer and homodimer. The cofactor is [4Fe-4S] cluster.

The enzyme catalyses GTP + AH2 + S-adenosyl-L-methionine = (8S)-3',8-cyclo-7,8-dihydroguanosine 5'-triphosphate + 5'-deoxyadenosine + L-methionine + A + H(+). It participates in cofactor biosynthesis; molybdopterin biosynthesis. In terms of biological role, catalyzes the cyclization of GTP to (8S)-3',8-cyclo-7,8-dihydroguanosine 5'-triphosphate. This chain is GTP 3',8-cyclase, found in Helicobacter pylori (strain J99 / ATCC 700824) (Campylobacter pylori J99).